A 1046-amino-acid chain; its full sequence is Suppressor of Mek1 (1046 aa).

Positions 1–101 (MEPLRKRVKV…QDIWENILQY (101 aa)) constitute a WH1 domain. The interval 626–1046 (FESPETSCNN…SSPTPSELHV (421 aa)) is disordered. The span at 665-689 (IDEEEEEAYFNRDDDSEDSDDEDEL) shows a compositional bias: acidic residues. Low complexity predominate over residues 695–713 (NNNNNNNNNNKQICTNNEN). The span at 714 to 727 (NMEKNDDNIEKDNE) shows a compositional bias: basic and acidic residues. Acidic residues predominate over residues 743 to 752 (YEDEDDEDDE). Residues 753–783 (INKSVESDDIVEKHEIIDKNEKKDEIMKENN) are compositionally biased toward basic and acidic residues. The segment covering 784 to 803 (DSDNDDNDNNDNDNDNDNNS) has biased composition (acidic residues). Positions 804 to 820 (DIENKNHLNNNGNNENN) are enriched in low complexity. Composition is skewed to basic and acidic residues over residues 826 to 855 (VQDKSNNKNNSDKINEDEKIEKQDEMKENL) and 862 to 876 (EKVKEKQPKDIKKEN). A compositionally biased stretch (low complexity) spans 889–905 (SNNSNNNNNNNNNNSNN). Basic and acidic residues predominate over residues 909-935 (GDNRKTTPKRKLDYEKNESVVSKKIDK). Over residues 958–995 (NNNNSNNNNNNNNNNNNNNNNNNNNNNNNNNNNNNNQN) the composition is skewed to low complexity. Over residues 996–1011 (DENELSSASEEEEEQL) the composition is skewed to acidic residues. Residues 1003 to 1022 (ASEEEEEQLENGKHIKKFKR) carry the Nuclear localization signal motif. The segment covering 1028–1038 (NNSSNNSNNSS) has biased composition (low complexity).

The protein belongs to the SMEK family. Interacts with ppp4c.

It is found in the cytoplasm. Its subcellular location is the cell cortex. It localises to the nucleus. Its function is as follows. Suppresses MEK1 null cell polarity, chemotaxis, and gene expression defects. Required for proper cytokinesis during vegetative growth, timely exit from the mound stage during development, and myosin II assembly. May be a regulatory subunit of serine/threonine-protein phosphatase 4 (PP4) and may control localization of PP4 to the nucleus. Involved in the regulation of some ppp4c functions, such as developmental progression, chemotaxis, expression of stress response genes and cell movement. This Dictyostelium discoideum (Social amoeba) protein is Suppressor of Mek1 (smkA).